The chain runs to 770 residues: Formate acetyltransferase (770 aa).

One can recognise a PFL domain in the interval 5–635; sequence NEMQKLAWAG…KTGNTPDGRR (631 aa). Cys419 serves as the catalytic S-acetylcysteine intermediate. Cys420 acts as the Cysteine radical intermediate in catalysis. A Glycine radical domain is found at 642–770; the sequence is PGANPMHGRD…VITRTFTESM (129 aa). A Glycine radical modification is found at Gly745.

This sequence belongs to the glycyl radical enzyme (GRE) family. PFL subfamily. Homodimer.

Its subcellular location is the cytoplasm. The enzyme catalyses formate + acetyl-CoA = pyruvate + CoA. The protein operates within fermentation; pyruvate fermentation; formate from pyruvate: step 1/1. Its function is as follows. Catalyzes the conversion of pyruvate to formate and acetyl-CoA. The sequence is that of Formate acetyltransferase (pflB) from Haemophilus influenzae (strain ATCC 51907 / DSM 11121 / KW20 / Rd).